The sequence spans 316 residues: tRNA dimethylallyltransferase (316 aa).

An ATP-binding site is contributed by glycine 13–threonine 20. Threonine 15–threonine 20 is a substrate binding site. The interval aspartate 38–glutamine 41 is interaction with substrate tRNA.

Belongs to the IPP transferase family. Monomer. Requires Mg(2+) as cofactor.

It catalyses the reaction adenosine(37) in tRNA + dimethylallyl diphosphate = N(6)-dimethylallyladenosine(37) in tRNA + diphosphate. Catalyzes the transfer of a dimethylallyl group onto the adenine at position 37 in tRNAs that read codons beginning with uridine, leading to the formation of N6-(dimethylallyl)adenosine (i(6)A). This chain is tRNA dimethylallyltransferase, found in Staphylococcus carnosus (strain TM300).